Reading from the N-terminus, the 2871-residue chain is Fibrillin-1 (2871 aa).

The N-terminal stretch at 1-24 is a signal peptide; the sequence is MRRGGLLEVALGFTVLLASYTSHG. A propeptide spanning residues 25–44 is cleaved from the precursor; the sequence is ADTNLEAGNVKETRANRAKR. The tract at residues 45 to 81 is fibrillin unique N-terminal (FUN) domain; sequence RGGGGHDALKGPNVCGSRYNAYCCPGWKTLPGGNQCI. An N-terminal domain region spans residues 45-450; the sequence is RGGGGHDALK…PPRVLPVNVT (406 aa). 11 disulfide bridges follow: cysteine 59–cysteine 68, cysteine 67–cysteine 80, cysteine 85–cysteine 94, cysteine 89–cysteine 100, cysteine 102–cysteine 111, cysteine 119–cysteine 129, cysteine 123–cysteine 134, cysteine 136–cysteine 145, cysteine 150–cysteine 160, cysteine 154–cysteine 166, and cysteine 168–cysteine 177. EGF-like domains are found at residues 81-112, 115-146, and 147-178; these read IVPI…PSCG, SIQH…THCG, and QPVC…PQCE. An interaction with MFAP4 region spans residues 119 to 329; that stretch reads CNIRCMNGGS…YTSPDGTRCI (211 aa). The TB 1 domain occupies 184–236; sequence GPCFTVISNQMCQGQLSGIVCTKTLCCATVGRAWGHPCEMCPAQPHPCRRGFI. The segment at 195–221 is hybrid domain 1; that stretch reads CQGQLSGIVCTKTLCCATVGRAWGHPC. The region spanning 246–287 is the EGF-like 4; calcium-binding domain; sequence DVDECQAIPGLCQGGNCINTVGSFECKCPAGHKFNEVSQKCE. 6 disulfides stabilise this stretch: cysteine 250/cysteine 262, cysteine 257/cysteine 271, cysteine 273/cysteine 286, cysteine 292/cysteine 304, cysteine 299/cysteine 313, and cysteine 315/cysteine 328. A glycan (O-linked (Glc) serine) is linked at serine 268. In terms of domain architecture, EGF-like 5; calcium-binding spans 288 to 329; the sequence is DIDECSTIPGICDGGECTNTVSSYFCKCPPGFYTSPDGTRCI. Positions 334–389 constitute a TB 2 domain; sequence GYCYTALANGRCSNQLPQSITKMQCCCDVGRCWSPGVTVAPEMCPIRATEDFNKLC. Asparagine 448 carries an N-linked (GlcNAc...) asparagine glycan. An EGF-like 6 domain is found at 449–489; it reads VTDYCQLFRYLCQNGRCIPTPGSYRCECNKGFQLDLRGECI. Disulfide bonds link cysteine 453–cysteine 465, cysteine 460–cysteine 474, cysteine 476–cysteine 488, cysteine 494–cysteine 504, cysteine 499–cysteine 513, cysteine 515–cysteine 528, cysteine 534–cysteine 546, cysteine 541–cysteine 555, cysteine 557–cysteine 570, cysteine 576–cysteine 587, cysteine 582–cysteine 596, cysteine 598–cysteine 611, cysteine 617–cysteine 628, cysteine 623–cysteine 637, and cysteine 639–cysteine 652. Residue serine 471 is glycosylated (O-linked (Glc) serine). Residues 490–529 enclose the EGF-like 7; calcium-binding domain; that stretch reads DVDECEKNPCAGGECINTQGSYTCQCRPGYQSTLTRTECR. Serine 510 is a glycosylation site (O-linked (Glc) serine). The EGF-like 8; calcium-binding domain occupies 530-571; sequence DIDECLQNGRICNNGRCINTDGSFHCVCNAGFHVTRDGKNCE. The EGF-like 9; calcium-binding domain maps to 572 to 612; sequence DMDECSIRNMCLNGMCINEDGSFKCICKPGFQLASDGRYCK. One can recognise an EGF-like 10; calcium-binding domain in the interval 613-653; sequence DINECETPGICMNGRCVNTDGSYRCECFPGLAVGLDGRVCV. In terms of domain architecture, TB 3 spans 659–711; that stretch reads STCYGGYKRGQCVKPLFGAVTKSECCCASTEYAFGEPCQPCPSQNSAEYQALC. An EGF-like 11; calcium-binding domain is found at 723–764; the sequence is DINECALDPDICPNGICENLRGTYKCICNSGYEVDSTGKNCV. 16 cysteine pairs are disulfide-bonded: cysteine 727–cysteine 739, cysteine 734–cysteine 748, cysteine 750–cysteine 763, cysteine 769–cysteine 781, cysteine 776–cysteine 790, cysteine 792–cysteine 805, cysteine 811–cysteine 821, cysteine 816–cysteine 830, cysteine 832–cysteine 845, cysteine 853–cysteine 875, cysteine 862–cysteine 887, cysteine 876–cysteine 890, cysteine 896–cysteine 908, cysteine 914–cysteine 926, cysteine 921–cysteine 935, and cysteine 937–cysteine 950. The EGF-like 12; calcium-binding domain maps to 765 to 806; it reads DINECVLNSLLCDNGQCRNTPGSFVCTCPKGFIYKPELKTCE. The EGF-like 13; calcium-binding domain maps to 807 to 846; the sequence is DIDECESSPCINGVCKNSPGSFICECSSESTLDPTKTICI. The region spanning 851 to 902 is the TB 4 domain; it reads GTCWQTVIDGRCEININGATLKSQCCSSLGAAWGSPCTPCQVDPICGKGYSR. The segment at 862 to 887 is hybrid domain 2; that stretch reads CEININGATLKSQCCSSLGAAWGSPC. The 42-residue stretch at 910–951 folds into the EGF-like 14; calcium-binding domain; that stretch reads DIDECEVFPGVCKNGLCVNSKGSFKCQCPSGMTLDATGRICL. Residues 956–1008 form the TB 5 domain; sequence ETCFLRYEDEECTLPVAGRHRMDACCCSVGAAWGTEECEECPVRNTPEYEELC. The EGF-like 15; calcium-binding domain maps to 1028–1069; that stretch reads DINECKMIPNLCTHGKCRNTIGSFKCRCDSGFALDSEERNCT. Intrachain disulfides connect cysteine 1032–cysteine 1044, cysteine 1039–cysteine 1053, cysteine 1055–cysteine 1068, cysteine 1074–cysteine 1086, cysteine 1081–cysteine 1095, cysteine 1097–cysteine 1111, cysteine 1117–cysteine 1129, cysteine 1124–cysteine 1138, cysteine 1140–cysteine 1153, cysteine 1159–cysteine 1171, cysteine 1166–cysteine 1180, cysteine 1182–cysteine 1195, cysteine 1201–cysteine 1212, cysteine 1208–cysteine 1221, cysteine 1223–cysteine 1236, cysteine 1242–cysteine 1254, cysteine 1249–cysteine 1263, cysteine 1265–cysteine 1278, cysteine 1284–cysteine 1296, cysteine 1291–cysteine 1305, cysteine 1307–cysteine 1320, cysteine 1326–cysteine 1339, cysteine 1333–cysteine 1348, cysteine 1350–cysteine 1361, cysteine 1367–cysteine 1380, cysteine 1374–cysteine 1389, cysteine 1391–cysteine 1402, cysteine 1408–cysteine 1420, cysteine 1415–cysteine 1429, cysteine 1431–cysteine 1444, cysteine 1450–cysteine 1461, cysteine 1456–cysteine 1470, cysteine 1472–cysteine 1485, cysteine 1491–cysteine 1502, cysteine 1497–cysteine 1511, cysteine 1513–cysteine 1526, cysteine 1534–cysteine 1562, cysteine 1549–cysteine 1574, cysteine 1563–cysteine 1577, cysteine 1564–cysteine 1589, cysteine 1610–cysteine 1622, cysteine 1617–cysteine 1631, cysteine 1633–cysteine 1646, cysteine 1652–cysteine 1663, cysteine 1658–cysteine 1672, and cysteine 1674–cysteine 1687. N-linked (GlcNAc...) asparagine glycosylation is present at asparagine 1067. The EGF-like 16; calcium-binding domain occupies 1070 to 1112; that stretch reads DIDECRISPDLCGRGQCVNTPGDFECKCDEGYESGFMMMKNCM. The 42-residue stretch at 1113–1154 folds into the EGF-like 17; calcium-binding domain; it reads DIDECQRDPLLCRGGVCLNTEGSYRCECPPGHQLAPNISACI. Residue serine 1135 is glycosylated (O-linked (Glc) serine). Asparagine 1149 is a glycosylation site (N-linked (GlcNAc...) asparagine). Residues 1155–1196 form the EGF-like 18; calcium-binding domain; sequence DINECELSAHLCPHGRCVNLIGKYQCACNPGYHSTPDRLFCV. The EGF-like 19; calcium-binding domain occupies 1197-1237; the sequence is DIDECSIMNGGCETFCTNSEGSYECSCQPGFALMPDQRSCT. Residue serine 1218 is glycosylated (O-linked (Glc) serine). In terms of domain architecture, EGF-like 20; calcium-binding spans 1238-1279; the sequence is DIDECEDNPNICDGGQCTNIPGEYRCLCYDGFMASEDMKTCV. The 42-residue stretch at 1280-1321 folds into the EGF-like 21; calcium-binding domain; it reads DVNECDLNPNICLSGTCENTKGSFICHCDMGYSGKKGKTGCT. The O-linked (Glc) serine glycan is linked to serine 1302. One can recognise an EGF-like 22; calcium-binding domain in the interval 1322 to 1362; sequence DINECEIGAHNCDRHAVCTNTAGSFKCSCSPGWIGDGIKCT. Residue serine 1345 is glycosylated (O-linked (Glc) serine). The EGF-like 23; calcium-binding domain occupies 1363 to 1403; the sequence is DLDECSNGTHMCSQHADCKNTMGSYRCLCKEGYTGDGFTCT. Asparagine 1369 carries N-linked (GlcNAc...) asparagine glycosylation. A glycan (O-linked (Glc) serine) is linked at serine 1386. The region spanning 1404-1445 is the EGF-like 24; calcium-binding domain; it reads DLDECSENLNLCGNGQCLNAPGGYRCECDMGFVPSADGKACE. In terms of domain architecture, EGF-like 25; calcium-binding spans 1446 to 1486; that stretch reads DIDECSLPNICVFGTCHNLPGLFRCECEIGYELDRSGGNCT. The N-linked (GlcNAc...) asparagine glycan is linked to asparagine 1484. The EGF-like 26; calcium-binding domain maps to 1487-1527; sequence DVNECLDPTTCISGNCVNTPGSYTCDCPPDFELNPTRVGCV. Residue serine 1508 is glycosylated (O-linked (Glc) serine). The C-terminal domain stretch occupies residues 1528–2731; the sequence is DTRSGNCYLD…GYPKRGRKRR (1204 aa). The TB 6 domain occupies 1532 to 1589; it reads GNCYLDIRPRGDNGDTACSNEIGVGVSKASCCCSLGKAWGTPCELCPPVNTSEYKILC. Residues 1541–1543 carry the Cell attachment site motif; sequence RGD. Asparagine 1581 carries N-linked (GlcNAc...) asparagine glycosylation. The region spanning 1606-1647 is the EGF-like 27; calcium-binding domain; the sequence is DIDECQELPGLCQGGKCINTFGSFQCRCPTGYYLNEDTRVCD. Serine 1628 carries O-linked (Glc) serine glycosylation. Residues 1648-1688 enclose the EGF-like 28; calcium-binding domain; that stretch reads DVNECETPGICGPGTCYNTVGNYTCICPPDYMQVNGGNNCM. An N-linked (GlcNAc...) asparagine glycan is attached at asparagine 1669. Positions 1693 to 1748 constitute a TB 7 domain; sequence SLCYRNYYADNQTCDGELLFNMTKKMCCCSYNIGRAWNKPCEQCPIPSTDEFATLC. Asparagine 1703 and asparagine 1713 each carry an N-linked (GlcNAc...) asparagine glycan. An EGF-like 29; calcium-binding domain is found at 1766–1807; the sequence is DIDECREIPGVCENGVCINMVGSFRCECPVGFFYNDKLLVCE. Cystine bridges form between cysteine 1770/cysteine 1782, cysteine 1777/cysteine 1791, cysteine 1793/cysteine 1806, cysteine 1812/cysteine 1824, cysteine 1818/cysteine 1833, cysteine 1835/cysteine 1847, cysteine 1853/cysteine 1865, cysteine 1860/cysteine 1874, cysteine 1876/cysteine 1889, cysteine 1895/cysteine 1905, cysteine 1900/cysteine 1914, cysteine 1916/cysteine 1928, cysteine 1934/cysteine 1947, cysteine 1942/cysteine 1956, cysteine 1958/cysteine 1971, cysteine 1977/cysteine 1989, cysteine 1984/cysteine 1998, cysteine 2000/cysteine 2011, cysteine 2017/cysteine 2029, cysteine 2024/cysteine 2038, cysteine 2040/cysteine 2053, cysteine 2061/cysteine 2083, cysteine 2070/cysteine 2096, cysteine 2084/cysteine 2099, cysteine 2085/cysteine 2111, cysteine 2131/cysteine 2142, cysteine 2137/cysteine 2151, cysteine 2153/cysteine 2164, cysteine 2170/cysteine 2181, cysteine 2176/cysteine 2190, cysteine 2192/cysteine 2204, cysteine 2210/cysteine 2221, cysteine 2217/cysteine 2230, cysteine 2232/cysteine 2245, cysteine 2251/cysteine 2265, cysteine 2258/cysteine 2274, cysteine 2276/cysteine 2289, cysteine 2295/cysteine 2307, cysteine 2302/cysteine 2316, and cysteine 2318/cysteine 2331. The EGF-like 30; calcium-binding domain occupies 1808–1848; sequence DIDECQNGPVCQRNAECINTAGSYRCDCKPGYRFTSTGQCN. An O-linked (Glc) serine glycan is attached at serine 1830. The EGF-like 31; calcium-binding domain maps to 1849-1890; sequence DRNECQEIPNICSHGQCIDTVGSFYCLCHTGFKTNADQTMCL. An O-linked (Glc) serine glycan is attached at serine 1871. The EGF-like 32; calcium-binding domain occupies 1891–1929; sequence DINECERDACGNGTCRNTIGSFNCRCNHGFILSHNNDCI. An N-linked (GlcNAc...) asparagine glycan is attached at asparagine 1902. The O-linked (Glc) serine glycan is linked to serine 1911. One can recognise an EGF-like 33; calcium-binding domain in the interval 1930-1972; it reads DVDECATGNGNLCRNGQCINTVGSFQCQCNEGYEVAPDGRTCV. An O-linked (Glc) serine glycan is attached at serine 1953. Residues 1973-2012 enclose the EGF-like 34; calcium-binding domain; that stretch reads DINECLLDPRKCAPGTCQNLDGSYRCICPPGYSLQNDKCE. An EGF-like 35; calcium-binding domain is found at 2013 to 2054; sequence DIDECVEEPEICALGTCSNTEGSFKCLCPDGFSLSSTGRRCQ. O-linked (Glc) serine glycosylation is present at serine 2035. Residues 2059 to 2111 enclose the TB 8 domain; that stretch reads SYCYAKFEGGKCSSPKSRNHSKQECCCALKGEGWGDPCELCPTEPDEAFRQIC. An N-linked (GlcNAc...) asparagine glycan is attached at asparagine 2077. An EGF-like 36; calcium-binding domain is found at 2127–2165; sequence DMDECKEPDVCKHGQCINTDGSYRCECPFGYILQGNECV. O-linked (Glc) serine glycosylation is present at serine 2148. Residues 2166–2205 form the EGF-like 37; calcium-binding domain; that stretch reads DTDECSVGNPCGNGTCKNVIGGFECTCEEGFEPGPMMTCE. N-linked (GlcNAc...) asparagine glycosylation is present at asparagine 2178. The 41-residue stretch at 2206 to 2246 folds into the EGF-like 38; calcium-binding domain; sequence DINECAQNPLLCAFRCVNTYGSYECKCPAGYVLREDRRMCK. Serine 2227 is a glycosylation site (O-linked (Glc) serine). An EGF-like 39; calcium-binding domain is found at 2247-2290; sequence DEDECEEGKHDCAEKQMECKNLIGTYLCICGPGYQRRPDGEGCV. Residues 2291 to 2332 form the EGF-like 40; calcium-binding domain; it reads DENECQTKPGICENGRCLNTRGSYTCECNDGFTASPNQDECL. A glycan (O-linked (Glc) serine) is linked at serine 2313. The region spanning 2337–2390 is the TB 9 domain; sequence GYCFTEVLQNMCQIGSSNRNPVTKSECCCDGGRGWGPHCEICPFQGTVAFKKLC. One can recognise an EGF-like 41; calcium-binding domain in the interval 2402–2443; that stretch reads DIDECKVIHDVCRNGECVNDRGSYHCICKTGYTPDITGTACV. Cystine bridges form between cysteine 2406-cysteine 2418, cysteine 2413-cysteine 2427, cysteine 2429-cysteine 2442, cysteine 2448-cysteine 2459, cysteine 2455-cysteine 2468, cysteine 2470-cysteine 2483, cysteine 2489-cysteine 2500, cysteine 2496-cysteine 2509, cysteine 2511-cysteine 2522, cysteine 2528-cysteine 2541, cysteine 2535-cysteine 2550, cysteine 2552-cysteine 2565, cysteine 2571-cysteine 2581, cysteine 2577-cysteine 2590, cysteine 2592-cysteine 2605, cysteine 2611-cysteine 2622, cysteine 2617-cysteine 2631, cysteine 2633-cysteine 2646, cysteine 2652-cysteine 2663, cysteine 2659-cysteine 2672, and cysteine 2674-cysteine 2686. The 41-residue stretch at 2444–2484 folds into the EGF-like 42; calcium-binding domain; the sequence is DLNECNQAPKPCNFICKNTEGSYQCSCPKGYILQEDGRSCK. The O-linked (Glc) serine glycan is linked to serine 2465. One can recognise an EGF-like 43; calcium-binding domain in the interval 2485 to 2523; that stretch reads DLDECATKQHNCQFLCVNTIGSFTCKCPPGFTQHHTACI. Residues 2524-2566 form the EGF-like 44; calcium-binding domain; that stretch reads DNNECTSDINLCGSKGICQNTPGSFTCECQRGFSLDPSGASCE. Serine 2547 carries an O-linked (Glc) serine glycan. One can recognise an EGF-like 45; calcium-binding domain in the interval 2567–2606; it reads DVDECEGNHRCQHGCQNIIGGYRCSCPQGYLQHYQWNQCV. In terms of domain architecture, EGF-like 46; calcium-binding spans 2607–2647; sequence DENECLSAHICGGASCHNTLGSYKCMCPAGFQYEQFSGGCQ. Serine 2628 carries an O-linked (Glc) serine glycan. The 40-residue stretch at 2648–2687 folds into the EGF-like 47; calcium-binding domain; sequence DINECGSAQAPCSYGCSNTEGGYLCACPPGYFRIGQGHCV. 2 positions are modified to phosphoserine: serine 2702 and serine 2709. N-linked (GlcNAc...) asparagine glycosylation is found at asparagine 2734, asparagine 2750, and asparagine 2767.

The protein belongs to the fibrillin family. As to quaternary structure, interacts with COL16A1. Interacts with integrin alpha-V/beta-3. Interacts with ADAMTS10; this interaction promotes microfibril assembly. Interacts with THSD4; this interaction promotes fibril formation. Interacts (via N-terminal domain) with FBLN2 and FBLN5. Interacts with ELN. Forms a ternary complex with ELN and FBLN2 or FBLN5 and a significant interaction with ELN seen only in the presence of FBLN2 or FBLN5. Interacts (via N-terminal domain) with LTBP2 (via C-terminal domain) in a Ca(+2)-dependent manner. Interacts (via N-terminal domain) with LTBP1 (via C-terminal domain). Interacts with integrins ITGA5:ITGB1, ITGAV:ITGB3 and ITGAV:ITGB6. Interacts (via N-terminal domain) with BMP2, BMP4, BMP7, BMP10 and GDF5. Interacts (via N-terminal domain) with MFAP2 and MFAP5. Interacts with ADAMTSL5. Interacts with MFAP4. Interacts (via N-terminal domain) with TNFSF11 in a Ca(+2)-dependent manner. Interacts (via N-terminal domain) with EFEMP2; this interaction inhibits EFEMP2 binding to LOX and ELN. In terms of processing, cleavage of N- and C-terminus by furin is required for incorporation into the extracellular matrix and assembly into microfibrils. The C-terminus, which corresponds to the Asprosin chain, was initially thought to constitute a propeptide. Fibrillin-1 and Asprosin chains are still linked together during the secretion from cells, but are subsequently separated by furin, an essential step for incorporation of Fibrillin-1 into the nascent microfibrils. Post-translationally, forms intermolecular disulfide bonds either with other fibrillin-1 molecules or with other components of the microfibrils. O-glycosylated on serine residues by POGLUT2 and POGLUT3 which is necessary for efficient protein secretion.

It is found in the secreted. The protein localises to the extracellular space. The protein resides in the extracellular matrix. Structural component of the 10-12 nm diameter microfibrils of the extracellular matrix, which conveys both structural and regulatory properties to load-bearing connective tissues. Fibrillin-1-containing microfibrils provide long-term force bearing structural support. In tissues such as the lung, blood vessels and skin, microfibrils form the periphery of the elastic fiber, acting as a scaffold for the deposition of elastin. In addition, microfibrils can occur as elastin-independent networks in tissues such as the ciliary zonule, tendon, cornea and glomerulus where they provide tensile strength and have anchoring roles. Fibrillin-1 also plays a key role in tissue homeostasis through specific interactions with growth factors, such as the bone morphogenetic proteins (BMPs), growth and differentiation factors (GDFs) and latent transforming growth factor-beta-binding proteins (LTBPs), cell-surface integrins and other extracellular matrix protein and proteoglycan components. Regulates osteoblast maturation by controlling TGF-beta bioavailability and calibrating TGF-beta and BMP levels, respectively. Negatively regulates osteoclastogenesis by binding and sequestering an osteoclast differentiation and activation factor TNFSF11. This leads to disruption of TNFSF11-induced Ca(2+) signaling and impairment of TNFSF11-mediated nuclear translocation and activation of transcription factor NFATC1 which regulates genes important for osteoclast differentiation and function. Mediates cell adhesion via its binding to cell surface receptors integrins ITGAV:ITGB3 and ITGA5:ITGB1. Binds heparin and this interaction plays an important role in the assembly of microfibrils. Its function is as follows. Hormone that targets the liver to increase plasma glucose levels. Secreted by white adipose tissue and circulates in the plasma. Acts in response to fasting and promotes blood glucose elevation by binding to the surface of hepatocytes. Promotes hepatocyte glucose release by activating the protein kinase A activity in the liver, resulting in rapid glucose release into the circulation. The sequence is that of Fibrillin-1 from Bos taurus (Bovine).